A 156-amino-acid polypeptide reads, in one-letter code: Maintenance of carboxysome distribution protein B (156 aa).

The interval 1–55 is required for interaction with McdA:DNA complex; that stretch reads MSNNALDRLINKQKPKVPPRNDVVSESVSNDIKTQGQQELNTSLPPSDTKATPEE. Positions 1 to 79 are disordered; it reads MSNNALDRLI…QKPKLSPDTF (79 aa). The span at 24-50 shows a compositional bias: polar residues; that stretch reads VSESVSNDIKTQGQQELNTSLPPSDTK. Positions 51–63 are enriched in basic and acidic residues; it reads ATPEEMPTSHESE. The stretch at 122–156 forms a coiled coil; it reads PEELAQVIQLAQERLSQRKAIADYKRAKTMQERFL.

As to quaternary structure, homodimerizes; may exist in higher order oligomers in solution. Forms a complex with McdA:DNA. Homohexamerizes, interacts with shell components of the carboxysome.

Its subcellular location is the carboxysome. Functionally, mcdA and McdB together mediate carboxysome (Cb) spacing, size, ultrastructure and probably inheritance in the cell, together they prevent Cb aggregation. McdA is an ATPase that forms dynamic gradients on the nucleoid in response to adapter protein McdB, which associates with carboxysomes. The interplay between McdA gradients on the nucleoid and McdB-bound carboxysomes result in the equal spacing of Cbs along the cell length. Stimulates the ATPase activity of McdA, causing McdA to be released from DNA. Undergoes liquid-liquid phase separation. Incorrect positioning (aggregation) of carboxysomes results in reduced CO(2) fixation by encapsulated ribulose-1,5-bisphosphate carboxylase (RuBisCO, cbbL/cbbS), which leads to slower growth. This Gloeothece citriformis (strain PCC 7424) (Cyanothece sp. (strain PCC 7424)) protein is Maintenance of carboxysome distribution protein B.